Here is a 193-residue protein sequence, read N- to C-terminus: Xanthine phosphoribosyltransferase (193 aa).

Positions 20 and 27 each coordinate xanthine. 129 to 133 (ANGKA) provides a ligand contact to 5-phospho-alpha-D-ribose 1-diphosphate. A xanthine-binding site is contributed by Lys-157.

This sequence belongs to the purine/pyrimidine phosphoribosyltransferase family. Xpt subfamily. As to quaternary structure, homodimer.

It localises to the cytoplasm. It carries out the reaction XMP + diphosphate = xanthine + 5-phospho-alpha-D-ribose 1-diphosphate. It functions in the pathway purine metabolism; XMP biosynthesis via salvage pathway; XMP from xanthine: step 1/1. In terms of biological role, converts the preformed base xanthine, a product of nucleic acid breakdown, to xanthosine 5'-monophosphate (XMP), so it can be reused for RNA or DNA synthesis. The chain is Xanthine phosphoribosyltransferase from Bifidobacterium adolescentis (strain ATCC 15703 / DSM 20083 / NCTC 11814 / E194a).